The chain runs to 305 residues: Protein FdhE homolog (305 aa).

It belongs to the FdhE family.

It is found in the cytoplasm. Necessary for formate dehydrogenase activity. In Stutzerimonas stutzeri (strain A1501) (Pseudomonas stutzeri), this protein is Protein FdhE homolog.